Here is a 467-residue protein sequence, read N- to C-terminus: tRNA-2-methylthio-N(6)-dimethylallyladenosine synthase (467 aa).

Positions 1–20 are disordered; sequence MSDDTTQIEPAMAQETSPRA. The region spanning 23-143 is the MTTase N-terminal domain; that stretch reads RKVFVKTYGC…LPNALARVRG (121 aa). Positions 32, 68, 106, 184, 188, and 191 each coordinate [4Fe-4S] cluster. The 233-residue stretch at 170 to 402 folds into the Radical SAM core domain; the sequence is RKRGVSAFLT…QALLSAQQYA (233 aa). Positions 405 to 467 constitute a TRAM domain; that stretch reads DSMIGRKMDV…TNSLIAQKLA (63 aa).

Belongs to the methylthiotransferase family. MiaB subfamily. Monomer. [4Fe-4S] cluster is required as a cofactor.

It is found in the cytoplasm. The catalysed reaction is N(6)-dimethylallyladenosine(37) in tRNA + (sulfur carrier)-SH + AH2 + 2 S-adenosyl-L-methionine = 2-methylsulfanyl-N(6)-dimethylallyladenosine(37) in tRNA + (sulfur carrier)-H + 5'-deoxyadenosine + L-methionine + A + S-adenosyl-L-homocysteine + 2 H(+). Its function is as follows. Catalyzes the methylthiolation of N6-(dimethylallyl)adenosine (i(6)A), leading to the formation of 2-methylthio-N6-(dimethylallyl)adenosine (ms(2)i(6)A) at position 37 in tRNAs that read codons beginning with uridine. In Brucella suis (strain ATCC 23445 / NCTC 10510), this protein is tRNA-2-methylthio-N(6)-dimethylallyladenosine synthase.